The chain runs to 341 residues: tRNA N6-adenosine threonylcarbamoyltransferase (341 aa).

The Fe cation site is built by histidine 112 and histidine 116. Substrate-binding positions include 138 to 142, aspartate 171, glycine 184, aspartate 188, and asparagine 279; that span reads TVSGG. Residue aspartate 307 participates in Fe cation binding.

The protein belongs to the KAE1 / TsaD family. Requires Fe(2+) as cofactor.

The protein resides in the cytoplasm. The catalysed reaction is L-threonylcarbamoyladenylate + adenosine(37) in tRNA = N(6)-L-threonylcarbamoyladenosine(37) in tRNA + AMP + H(+). Functionally, required for the formation of a threonylcarbamoyl group on adenosine at position 37 (t(6)A37) in tRNAs that read codons beginning with adenine. Is involved in the transfer of the threonylcarbamoyl moiety of threonylcarbamoyl-AMP (TC-AMP) to the N6 group of A37, together with TsaE and TsaB. TsaD likely plays a direct catalytic role in this reaction. In Riemerella anatipestifer (Moraxella anatipestifer), this protein is tRNA N6-adenosine threonylcarbamoyltransferase.